The following is a 1337-amino-acid chain: DNA-directed RNA polymerase subunit beta' (1337 aa).

Positions 60, 62, 75, and 78 each coordinate Zn(2+). Mg(2+) contacts are provided by D536, D538, and D540. 4 residues coordinate Zn(2+): C895, C974, C981, and C984.

The protein belongs to the RNA polymerase beta' chain family. In terms of assembly, the RNAP catalytic core consists of 2 alpha, 1 beta, 1 beta' and 1 omega subunit. When a sigma factor is associated with the core the holoenzyme is formed, which can initiate transcription. Requires Mg(2+) as cofactor. It depends on Zn(2+) as a cofactor.

The catalysed reaction is RNA(n) + a ribonucleoside 5'-triphosphate = RNA(n+1) + diphosphate. Functionally, DNA-dependent RNA polymerase catalyzes the transcription of DNA into RNA using the four ribonucleoside triphosphates as substrates. This Bifidobacterium adolescentis (strain ATCC 15703 / DSM 20083 / NCTC 11814 / E194a) protein is DNA-directed RNA polymerase subunit beta'.